A 540-amino-acid polypeptide reads, in one-letter code: Probable G-protein coupled receptor 75 (540 aa).

A compositionally biased stretch (polar residues) spans 1 to 15; that stretch reads MNSTGHLQDAPNATS. The interval 1 to 27 is disordered; the sequence is MNSTGHLQDAPNATSLHVPHSQEGNST. Over 1-46 the chain is Extracellular; the sequence is MNSTGHLQDAPNATSLHVPHSQEGNSTSLQEGLQDLIHTATLVTCT. N-linked (GlcNAc...) asparagine glycosylation is found at Asn2, Asn12, and Asn25. Residues 47-67 form a helical membrane-spanning segment; sequence FLLAVIFCLGSYGNFIVFLSF. Topologically, residues 68-86 are cytoplasmic; that stretch reads FDPAFRKFRTNFDFMILNL. The helical transmembrane segment at 87–107 threads the bilayer; sequence SFCDLFICGVTAPMFTFVLFF. Residues 108 to 120 are Extracellular-facing; it reads SSASSIPDAFCFT. A helical transmembrane segment spans residues 121-141; that stretch reads FHLTSSGFIIMSLKTVAVIAL. Residues 142–160 are Cytoplasmic-facing; the sequence is HRLRMVLGKQPNRTASFPC. A helical membrane pass occupies residues 161–181; the sequence is TVLLTLLLWATSFTLATLATL. Over 182–205 the chain is Extracellular; the sequence is KTSKSHLCLPMSSLIAGKGKAILS. A helical transmembrane segment spans residues 206-226; that stretch reads LYVVDFTFCVAVVSVSYIMIA. Topologically, residues 227–318 are cytoplasmic; it reads QTLRKNAQVR…INLSTAKDSK (92 aa). A helical transmembrane segment spans residues 319-339; sequence AVVTCVIIVLSVLVCCLPLGI. Residues 340–350 lie on the Extracellular side of the membrane; that stretch reads SLVQVVLSSNG. The chain crosses the membrane as a helical span at residues 351-371; it reads SFILYQFELFGFTLIFFKSGL. Residues 372-540 are Cytoplasmic-facing; sequence NPFIYSRNSA…SAKQIPVPSV (169 aa).

The protein belongs to the G-protein coupled receptor 1 family. Expressed at high levels in brain and spinal cord and at detectable levels in retinal pigment epithelium. In situ hybridization of adult eye sections localized transcripts only to the perivascular cells, surrounding retinal arterioles, in the ganglion cell/nerve fiber layer. Also expressed by islet cells (at protein level).

It is found in the cell membrane. G protein-coupled receptor that is activated by the chemokine CCL5/RANTES. Probably coupled to heterotrimeric Gq proteins, it stimulates inositol trisphosphate production and calcium mobilization upon activation. Together with CCL5/RANTES, may play a role in neuron survival through activation of a downstream signaling pathway involving the PI3, Akt and MAP kinases. CCL5/RANTES may also regulate insulin secretion by pancreatic islet cells through activation of this receptor. The chain is Probable G-protein coupled receptor 75 (GPR75) from Homo sapiens (Human).